A 65-amino-acid polypeptide reads, in one-letter code: Large ribosomal subunit protein bL31 (65 aa).

Cys16, Cys18, Cys36, and Cys39 together coordinate Zn(2+).

The protein belongs to the bacterial ribosomal protein bL31 family. Type A subfamily. In terms of assembly, part of the 50S ribosomal subunit. The cofactor is Zn(2+).

In terms of biological role, binds the 23S rRNA. This is Large ribosomal subunit protein bL31 from Carboxydothermus hydrogenoformans (strain ATCC BAA-161 / DSM 6008 / Z-2901).